Consider the following 128-residue polypeptide: Small ribosomal subunit protein uS11 (128 aa).

The protein belongs to the universal ribosomal protein uS11 family. Part of the 30S ribosomal subunit. Interacts with proteins S7 and S18. Binds to IF-3.

Located on the platform of the 30S subunit, it bridges several disparate RNA helices of the 16S rRNA. Forms part of the Shine-Dalgarno cleft in the 70S ribosome. The chain is Small ribosomal subunit protein uS11 from Desulfosudis oleivorans (strain DSM 6200 / JCM 39069 / Hxd3) (Desulfococcus oleovorans).